The chain runs to 399 residues: Tryptophan synthase beta chain (399 aa).

N6-(pyridoxal phosphate)lysine is present on K92.

It belongs to the TrpB family. As to quaternary structure, tetramer of two alpha and two beta chains. Pyridoxal 5'-phosphate serves as cofactor.

The enzyme catalyses (1S,2R)-1-C-(indol-3-yl)glycerol 3-phosphate + L-serine = D-glyceraldehyde 3-phosphate + L-tryptophan + H2O. It functions in the pathway amino-acid biosynthesis; L-tryptophan biosynthesis; L-tryptophan from chorismate: step 5/5. The beta subunit is responsible for the synthesis of L-tryptophan from indole and L-serine. The chain is Tryptophan synthase beta chain from Bordetella petrii (strain ATCC BAA-461 / DSM 12804 / CCUG 43448).